The sequence spans 874 residues: Alanine--tRNA ligase (874 aa).

Residues histidine 562, histidine 566, cysteine 665, and histidine 669 each contribute to the Zn(2+) site.

It belongs to the class-II aminoacyl-tRNA synthetase family. Requires Zn(2+) as cofactor.

The protein resides in the cytoplasm. The enzyme catalyses tRNA(Ala) + L-alanine + ATP = L-alanyl-tRNA(Ala) + AMP + diphosphate. In terms of biological role, catalyzes the attachment of alanine to tRNA(Ala) in a two-step reaction: alanine is first activated by ATP to form Ala-AMP and then transferred to the acceptor end of tRNA(Ala). Also edits incorrectly charged Ser-tRNA(Ala) and Gly-tRNA(Ala) via its editing domain. This Pseudomonas savastanoi pv. phaseolicola (strain 1448A / Race 6) (Pseudomonas syringae pv. phaseolicola (strain 1448A / Race 6)) protein is Alanine--tRNA ligase.